Reading from the N-terminus, the 471-residue chain is U1 small nuclear ribonucleoprotein 70 kDa (471 aa).

Positions 48-78 (FEDPRDAPPPTRAETREERMERKRREKIERR) are disordered. A compositionally biased stretch (basic and acidic residues) spans 60–78 (AETREERMERKRREKIERR). The required for interaction with U1 RNA stretch occupies residues 92 to 202 (HNDQNAQGDA…GGGLGGTRRG (111 aa)). Positions 103–184 (KTLFVARVNY…LVDVERGRTV (82 aa)) constitute an RRM domain. The disordered stretch occupies residues 187–471 (WRPRRLGGGL…NGYMMEPPME (285 aa)). Positions 192–201 (LGGGLGGTRR) are enriched in gly residues. Positions 207 to 245 (NIRHSGRDDTSRYDERDRDRERERDRRERSRERDKERER) are enriched in basic and acidic residues. A compositionally biased stretch (basic residues) spans 246–259 (RRSRSRERRRRSRS). Positions 260 to 293 (REKEERKRSRERSRDKDKDKDKDKDKEKDKDKDR) are enriched in basic and acidic residues. Residues 294 to 303 (DRKRRSRSRE) show a composition bias toward basic residues. Basic and acidic residues-rich tracts occupy residues 304–321 (RKRE…RVEG) and 344–428 (IELK…ERVP).

As to quaternary structure, component of the U1 snRNP. The U1 snRNP is composed of the U1 snRNA and the 7 core Sm proteins snrpb, snrpd1, snrpd2, snrpd3, snrpe, snrpf and snrpg that assemble in a heptameric protein ring on the Sm site of the small nuclear RNA to form the core snRNP, and at least three U1 snRNP-specific proteins snrnp70/U1-70K, snrpa/U1-A and snrpc/U1-C.

It is found in the nucleus speckle. It localises to the nucleus. The protein localises to the nucleoplasm. Its function is as follows. Component of the spliceosomal U1 snRNP, which is essential for recognition of the pre-mRNA 5' splice-site and the subsequent assembly of the spliceosome. snrnp70 binds to the loop I region of U1-snRNA. In Xenopus tropicalis (Western clawed frog), this protein is U1 small nuclear ribonucleoprotein 70 kDa (snrnp70).